We begin with the raw amino-acid sequence, 156 residues long: Endoribonuclease YbeY (156 aa).

Zn(2+) contacts are provided by His122, His126, and His132.

It belongs to the endoribonuclease YbeY family. Zn(2+) is required as a cofactor.

The protein localises to the cytoplasm. Single strand-specific metallo-endoribonuclease involved in late-stage 70S ribosome quality control and in maturation of the 3' terminus of the 16S rRNA. The chain is Endoribonuclease YbeY from Bacillus cereus (strain ATCC 14579 / DSM 31 / CCUG 7414 / JCM 2152 / NBRC 15305 / NCIMB 9373 / NCTC 2599 / NRRL B-3711).